Here is a 333-residue protein sequence, read N- to C-terminus: Protein-methionine-sulfoxide reductase catalytic subunit MsrP (333 aa).

Positions 1-43 form a signal peptide, tat-type signal; it reads MSKQRKLTEADVTPESVFYQRRKVLQALGITAASLALPHNAQA. Residues N87, 90 to 91, C145, T180, N232, R237, and 248 to 250 each bind Mo-molybdopterin; these read YE and GIK.

This sequence belongs to the MsrP family. As to quaternary structure, heterodimer of a catalytic subunit (MsrP) and a heme-binding subunit (MsrQ). Requires Mo-molybdopterin as cofactor. Post-translationally, predicted to be exported by the Tat system. The position of the signal peptide cleavage has not been experimentally proven.

It localises to the periplasm. It carries out the reaction L-methionyl-[protein] + a quinone + H2O = L-methionyl-(S)-S-oxide-[protein] + a quinol. The catalysed reaction is L-methionyl-[protein] + a quinone + H2O = L-methionyl-(R)-S-oxide-[protein] + a quinol. Functionally, part of the MsrPQ system that repairs oxidized periplasmic proteins containing methionine sulfoxide residues (Met-O), using respiratory chain electrons. Thus protects these proteins from oxidative-stress damage caused by reactive species of oxygen and chlorine generated by the host defense mechanisms. MsrPQ is essential for the maintenance of envelope integrity under bleach stress, rescuing a wide series of structurally unrelated periplasmic proteins from methionine oxidation. The catalytic subunit MsrP is non-stereospecific, being able to reduce both (R-) and (S-) diastereoisomers of methionine sulfoxide. The polypeptide is Protein-methionine-sulfoxide reductase catalytic subunit MsrP (Serratia proteamaculans (strain 568)).